The chain runs to 160 residues: UPF0225 protein CGSHiEE_01665 (160 aa).

The protein belongs to the UPF0225 family.

In Haemophilus influenzae (strain PittEE), this protein is UPF0225 protein CGSHiEE_01665.